We begin with the raw amino-acid sequence, 874 residues long: GRB2-associated and regulator of MAPK protein 2 (874 aa).

Positions Arg12 to Arg339 are CABIT. The segment covering Gly188–Ala206 has biased composition (gly residues). Disordered stretches follow at residues Gly188–Arg207, Pro388–Ala422, Gly437–Pro545, Gly563–Leu598, and Ala625–Ala742. Low complexity-rich tracts occupy residues Pro388–Gly403 and Ser518–Pro545. Residues Pro575–Arg585 show a composition bias toward polar residues. Low complexity-rich tracts occupy residues Pro632–Pro650 and Ala658–Ser691. At Ser735 the chain carries Phosphoserine. In terms of domain architecture, SAM spans Ser807 to Arg871.

This sequence belongs to the GAREM family.

Functionally, probable adapter protein that may provide a link between cell surface epidermal growth factor receptor and the MAPK/ERK signaling pathway. The protein is GRB2-associated and regulator of MAPK protein 2 (GAREM2) of Homo sapiens (Human).